The chain runs to 396 residues: Acetate kinase (396 aa).

Position 8 (N8) interacts with Mg(2+). ATP is bound at residue K15. Residue R89 participates in substrate binding. D146 functions as the Proton donor/acceptor in the catalytic mechanism. ATP contacts are provided by residues 206-210, 283-285, and 331-335; these read HIGNG, DMR, and GVGEN. E383 is a binding site for Mg(2+).

Belongs to the acetokinase family. Homodimer. The cofactor is Mg(2+). It depends on Mn(2+) as a cofactor.

It is found in the cytoplasm. It catalyses the reaction acetate + ATP = acetyl phosphate + ADP. It functions in the pathway metabolic intermediate biosynthesis; acetyl-CoA biosynthesis; acetyl-CoA from acetate: step 1/2. In terms of biological role, catalyzes the formation of acetyl phosphate from acetate and ATP. Can also catalyze the reverse reaction. This Streptococcus pneumoniae (strain ATCC 700669 / Spain 23F-1) protein is Acetate kinase.